The following is a 60-amino-acid chain: Three-finger toxin Mnn I (60 aa).

Cystine bridges form between Cys-3–Cys-22, Cys-17–Cys-39, Cys-41–Cys-52, and Cys-53–Cys-58.

This sequence belongs to the three-finger toxin family. Short-chain subfamily. Type I alpha-neurotoxin sub-subfamily. In terms of tissue distribution, expressed by the venom gland.

The protein localises to the secreted. In terms of biological role, binds to muscle nicotinic acetylcholine receptor (nAChR) and inhibit acetylcholine from binding to the receptor, thereby impairing neuromuscular transmission. The protein is Three-finger toxin Mnn I of Micrurus nigrocinctus (Central American coral snake).